We begin with the raw amino-acid sequence, 423 residues long: AP-1 complex subunit mu-2 (423 aa).

The MHD domain maps to 168–421 (KNEVFIDVIE…ITQSGDYQLR (254 aa)).

This sequence belongs to the adaptor complexes medium subunit family. Adaptor protein complex 1 (AP-1) is a heterotetramer composed of two large adaptins (gamma-type subunit AP1G1 and beta-type subunit AP1B1), a medium adaptin (mu-type subunit AP1M1 or AP1M2) and a small adaptin (sigma-type subunit AP1S1 or AP1S2 or AP1S3). Interacts with P2X4. Phosphorylation of membrane-bound AP1M1/AP1M2 increases its affinity for sorting signals.

Its subcellular location is the cytoplasmic vesicle. It localises to the clathrin-coated vesicle membrane. It is found in the golgi apparatus. Subunit of clathrin-associated adaptor protein complex 1 that plays a role in protein sorting in the trans-Golgi network (TGN) and endosomes. The AP complexes mediate the recruitment of clathrin to membranes and the recognition of sorting signals within the cytosolic tails of transmembrane cargo molecules. This Bos taurus (Bovine) protein is AP-1 complex subunit mu-2.